Consider the following 386-residue polypeptide: MKHSATSSEAHARATWPLPEPTLAYFPNARFVPSDRDLDAGAARPIRGGVAVVDDSPDFGHVPVLLERCVELLTPALTRRHPDGSGAVLLDATLGAGGHAERFLTDLPGLRLIALDRDPSALEIARERLARFADRITLVHTRYDGIAAALTESGYAATESVDGILFDLGVSSMQLDRPERGFAYAQDAPLDMRMDPGSPLTAADILNTYDEAELADILHRYGEERFARRIAAQIVRRRAKEPFTSTADLVSLLYQAIPAPARRTGGHPAKRTFQALRIAVNDELDTLRCALPAALDALAVDGRIVVLAYQSLEDRIVKRLFAQAVASRTPVDLPVELPGHEPRFRALTHGAGRADAAEIERNPRSAAVRLRALQRTQAPQATGKGD.

S-adenosyl-L-methionine is bound by residues 97 to 99 (GGH), aspartate 116, tyrosine 143, aspartate 167, and glutamine 174.

It belongs to the methyltransferase superfamily. RsmH family.

It localises to the cytoplasm. It catalyses the reaction cytidine(1402) in 16S rRNA + S-adenosyl-L-methionine = N(4)-methylcytidine(1402) in 16S rRNA + S-adenosyl-L-homocysteine + H(+). In terms of biological role, specifically methylates the N4 position of cytidine in position 1402 (C1402) of 16S rRNA. In Mycobacterium avium (strain 104), this protein is Ribosomal RNA small subunit methyltransferase H.